Reading from the N-terminus, the 366-residue chain is 3-isopropylmalate dehydrogenase (366 aa).

Position 78-91 (78-91 (GPKWEDLPSHLQPE)) interacts with NAD(+). Positions 99, 109, 138, and 227 each coordinate substrate. Mg(2+) is bound by residues Asp227, Asp251, and Asp255. An NAD(+)-binding site is contributed by 285-297 (GSAPDIKGKNIAN).

It belongs to the isocitrate and isopropylmalate dehydrogenases family. LeuB type 1 subfamily. Homodimer. Mg(2+) is required as a cofactor. Requires Mn(2+) as cofactor.

It localises to the cytoplasm. It carries out the reaction (2R,3S)-3-isopropylmalate + NAD(+) = 4-methyl-2-oxopentanoate + CO2 + NADH. It functions in the pathway amino-acid biosynthesis; L-leucine biosynthesis; L-leucine from 3-methyl-2-oxobutanoate: step 3/4. In terms of biological role, catalyzes the oxidation of 3-carboxy-2-hydroxy-4-methylpentanoate (3-isopropylmalate) to 3-carboxy-4-methyl-2-oxopentanoate. The product decarboxylates to 4-methyl-2 oxopentanoate. This chain is 3-isopropylmalate dehydrogenase, found in Buchnera aphidicola subsp. Baizongia pistaciae (strain Bp).